A 561-amino-acid polypeptide reads, in one-letter code: Eukaryotic translation initiation factor 3 subunit D-1 (561 aa).

Residues 98 to 164 (VQKPPHQRGR…RGPPPKMRES (67 aa)) form a disordered region. The span at 100–121 (KPPHQRGRFRNMRNSRSGRGRN) shows a compositional bias: basic residues. Thr128 is subject to Phosphothreonine. Positions 289–303 (EFDLLTVNETSVEPP) are RNA gate.

The protein belongs to the eIF-3 subunit D family. As to quaternary structure, component of the eukaryotic translation initiation factor 3 (eIF-3) complex. The eIF-3 complex interacts with pix.

The protein resides in the cytoplasm. Functionally, mRNA cap-binding component of the eukaryotic translation initiation factor 3 (eIF-3) complex, which is involved in protein synthesis of a specialized repertoire of mRNAs and, together with other initiation factors, stimulates binding of mRNA and methionyl-tRNAi to the 40S ribosome. The eIF-3 complex specifically targets and initiates translation of a subset of mRNAs involved in cell proliferation. In the eIF-3 complex, eif3d specifically recognizes and binds the 7-methylguanosine cap of a subset of mRNAs. This is Eukaryotic translation initiation factor 3 subunit D-1 from Drosophila ananassae (Fruit fly).